A 198-amino-acid chain; its full sequence is Probable nicotinate-nucleotide adenylyltransferase (198 aa).

It belongs to the NadD family.

It carries out the reaction nicotinate beta-D-ribonucleotide + ATP + H(+) = deamido-NAD(+) + diphosphate. It functions in the pathway cofactor biosynthesis; NAD(+) biosynthesis; deamido-NAD(+) from nicotinate D-ribonucleotide: step 1/1. Catalyzes the reversible adenylation of nicotinate mononucleotide (NaMN) to nicotinic acid adenine dinucleotide (NaAD). The sequence is that of Probable nicotinate-nucleotide adenylyltransferase from Herpetosiphon aurantiacus (strain ATCC 23779 / DSM 785 / 114-95).